The primary structure comprises 366 residues: Phospho-N-acetylmuramoyl-pentapeptide-transferase (366 aa).

Helical transmembrane passes span 27 to 47 (AALF…IASL), 71 to 91 (TPTM…LLWA), 93 to 113 (LSSI…AIGF), 138 to 158 (FVIA…AGAA), 174 to 194 (LMLN…VGAG), 205 to 225 (GLAI…AYLA), 245 to 265 (LAVI…FNAP), 268 to 288 (AIFM…TVAV), 297 to 317 (VIIG…VFWF), and 343 to 363 (QVVI…LSTL).

This sequence belongs to the glycosyltransferase 4 family. MraY subfamily. Mg(2+) serves as cofactor.

It localises to the cell inner membrane. It carries out the reaction UDP-N-acetyl-alpha-D-muramoyl-L-alanyl-gamma-D-glutamyl-meso-2,6-diaminopimeloyl-D-alanyl-D-alanine + di-trans,octa-cis-undecaprenyl phosphate = di-trans,octa-cis-undecaprenyl diphospho-N-acetyl-alpha-D-muramoyl-L-alanyl-D-glutamyl-meso-2,6-diaminopimeloyl-D-alanyl-D-alanine + UMP. The protein operates within cell wall biogenesis; peptidoglycan biosynthesis. Its function is as follows. Catalyzes the initial step of the lipid cycle reactions in the biosynthesis of the cell wall peptidoglycan: transfers peptidoglycan precursor phospho-MurNAc-pentapeptide from UDP-MurNAc-pentapeptide onto the lipid carrier undecaprenyl phosphate, yielding undecaprenyl-pyrophosphoryl-MurNAc-pentapeptide, known as lipid I. The chain is Phospho-N-acetylmuramoyl-pentapeptide-transferase from Sinorhizobium medicae (strain WSM419) (Ensifer medicae).